A 186-amino-acid chain; its full sequence is Oligoribonuclease (186 aa).

The 164-residue stretch at 8–171 folds into the Exonuclease domain; sequence LIWIDLEMTG…DDIRESIAEL (164 aa). The active site involves tyrosine 129.

This sequence belongs to the oligoribonuclease family.

The protein localises to the cytoplasm. Functionally, 3'-to-5' exoribonuclease specific for small oligoribonucleotides. The chain is Oligoribonuclease from Mannheimia succiniciproducens (strain KCTC 0769BP / MBEL55E).